The chain runs to 277 residues: Inositol monophosphatase 1 (277 aa).

4 residues coordinate Mg(2+): E70, D90, I92, and D93. Substrate contacts are provided by residues E70, 90–95, 194–196, E213, and D220; these read DPIDGT and GTA. A Mg(2+)-binding site is contributed by D220.

It belongs to the inositol monophosphatase superfamily. In terms of assembly, homodimer. Mg(2+) is required as a cofactor. In terms of tissue distribution, mostly expressed in brain, small intestine, testis, kidney, and spleen (at protein level).

Its subcellular location is the cytoplasm. It catalyses the reaction a myo-inositol phosphate + H2O = myo-inositol + phosphate. The enzyme catalyses 1D-myo-inositol 1-phosphate + H2O = myo-inositol + phosphate. The catalysed reaction is 1D-myo-inositol 2-phosphate + H2O = myo-inositol + phosphate. It carries out the reaction 1D-myo-inositol 3-phosphate + H2O = myo-inositol + phosphate. It catalyses the reaction 1D-myo-inositol 4-phosphate + H2O = myo-inositol + phosphate. The enzyme catalyses 1D-myo-inositol 5-phosphate + H2O = myo-inositol + phosphate. The catalysed reaction is 1D-myo-inositol 6-phosphate + H2O = myo-inositol + phosphate. It carries out the reaction scyllo-inositol 1-phosphate + H2O = scyllo-inositol + phosphate. It catalyses the reaction alpha-D-galactose 1-phosphate + H2O = D-galactose + phosphate. The enzyme catalyses alpha-D-glucose 1-phosphate + H2O = D-glucose + phosphate. The catalysed reaction is D-glucose 6-phosphate + H2O = D-glucose + phosphate. It carries out the reaction beta-D-fructose 1-phosphate + H2O = D-fructose + phosphate. It catalyses the reaction glycerol 2-phosphate + H2O = glycerol + phosphate. The enzyme catalyses adenosine 2'-phosphate + H2O = adenosine + phosphate. Its pathway is polyol metabolism; myo-inositol biosynthesis; myo-inositol from D-glucose 6-phosphate: step 2/2. With respect to regulation, inhibited by Li(+), Ca(2+) and Mn(2+), but also by Mg(2+) at concentrations above 3 mM. Functionally, phosphatase involved in the dephosphorylation of myo-inositol monophosphate to generate myo-inositol. Is also able to dephosphorylate scyllo-inositol-phosphate, myo-inositol 1,4-diphosphate, scyllo-inositol-1,3-diphosphate and scyllo-inositol-1,4-diphosphate. Also dephosphorylates in vitro other sugar-phosphates including D-galactose-1-phosphate, glucose-1-phosphate, glucose-6-phosphate, fructose-1-phosphate, beta-glycerophosphate and 2'-AMP. Responsible for the provision of inositol required for synthesis of phosphatidylinositol and polyphosphoinositides, and involved in maintaining normal brain function. Has been implicated as the pharmacological target for lithium Li(+) action in brain. This is Inositol monophosphatase 1 (Impa1) from Mus musculus (Mouse).